The chain runs to 494 residues: DBIRD complex subunit ZNF326 (494 aa).

Disordered stretches follow at residues 1–22, 147–170, and 202–264; these read MDRE…QSFS, AFGG…RGQM, and KMAP…NSEK. A compositionally biased stretch (polar residues) spans 7–22; it reads SYNQRSVNSYGNQSFS. The Bipartite nuclear localization signal signature appears at 200 to 221; it reads KRKMAPPFKPVGFFGKKQKLSK. 2 C2H2 AKAP95-type zinc fingers span residues 273–295 and 365–388; these read CSFC…SATH and CSAC…SADH. Residues 429–494 form a disordered region; the sequence is PFETQPDEQQ…CDPLTTTDEV (66 aa). Residues 433-451 show a composition bias toward acidic residues; sequence QPDEQQQEQEEEEEEEEQQ.

The protein belongs to the AKAP95 family. In terms of assembly, component of the DBIRD complex.

It is found in the nucleus. In terms of biological role, core component of the DBIRD complex, a multiprotein complex that acts at the interface between core mRNP particles and RNA polymerase II (RNAPII) and integrates transcript elongation with the regulation of alternative splicing. This chain is DBIRD complex subunit ZNF326 (znf326), found in Xenopus laevis (African clawed frog).